We begin with the raw amino-acid sequence, 697 residues long: Elongation factor G (697 aa).

One can recognise a tr-type G domain in the interval 8 to 290 (ERYRNIGIMA…AVLSYMPSPV (283 aa)). GTP is bound by residues 17-24 (AHIDAGKT), 88-92 (DTPGH), and 142-145 (NKMD).

The protein belongs to the TRAFAC class translation factor GTPase superfamily. Classic translation factor GTPase family. EF-G/EF-2 subfamily.

Its subcellular location is the cytoplasm. Catalyzes the GTP-dependent ribosomal translocation step during translation elongation. During this step, the ribosome changes from the pre-translocational (PRE) to the post-translocational (POST) state as the newly formed A-site-bound peptidyl-tRNA and P-site-bound deacylated tRNA move to the P and E sites, respectively. Catalyzes the coordinated movement of the two tRNA molecules, the mRNA and conformational changes in the ribosome. The chain is Elongation factor G from Nitrosococcus oceani (strain ATCC 19707 / BCRC 17464 / JCM 30415 / NCIMB 11848 / C-107).